We begin with the raw amino-acid sequence, 425 residues long: tRNA(Ile)-lysidine synthase (425 aa).

27–32 (SGGLDS) provides a ligand contact to ATP.

Belongs to the tRNA(Ile)-lysidine synthase family.

The protein localises to the cytoplasm. The enzyme catalyses cytidine(34) in tRNA(Ile2) + L-lysine + ATP = lysidine(34) in tRNA(Ile2) + AMP + diphosphate + H(+). In terms of biological role, ligates lysine onto the cytidine present at position 34 of the AUA codon-specific tRNA(Ile) that contains the anticodon CAU, in an ATP-dependent manner. Cytidine is converted to lysidine, thus changing the amino acid specificity of the tRNA from methionine to isoleucine. This Streptococcus pneumoniae serotype 19F (strain G54) protein is tRNA(Ile)-lysidine synthase.